The primary structure comprises 598 residues: Vanadium-dependent bromoperoxidase (598 aa).

Phe361, Gln363, Asp365, Asp368, and Gln370 together coordinate Ca(2+). Vanadate contacts are provided by Lys400 and Arg408. The active site involves His480. 5 residues coordinate vanadate: Ser485, Gly486, His487, Arg547, and His553. Residue His487 is part of the active site.

Belongs to the vanadium-dependent haloperoxidase family. In terms of assembly, homododecamer. Requires Ca(2+) as cofactor. The cofactor is vanadate.

It carries out the reaction RH + Br(-) + H2O2 = RBr + 2 H2O.. In terms of biological role, catalyzes the halogenation of organic substrates in the presence of hydrogen peroxide. This is Vanadium-dependent bromoperoxidase from Corallina officinalis (Coral seaweed).